Here is a 189-residue protein sequence, read N- to C-terminus: Homeobox protein HD-2 (189 aa).

A DNA-binding region (homeobox; TALE-type) is located at residues 119–181; sequence KPRTRANFPM…NARRRILPFM (63 aa).

This sequence belongs to the TALE/KNOX homeobox family.

Its subcellular location is the nucleus. This chain is Homeobox protein HD-2 (HD-2), found in Encephalitozoon cuniculi (strain GB-M1) (Microsporidian parasite).